The following is a 286-amino-acid chain: 3-amino-tetrahydro-pyrrolizinone reductase (286 aa).

Tyrosine 146 functions as the Proton acceptor in the catalytic mechanism.

This sequence belongs to the short-chain dehydrogenases/reductases (SDR) family.

The enzyme catalyses 3-amino-5,6,7,7a-tetrahydro-1H-pyrrolizin-1-one + AH2 = 3-amino-tetrahydro-1H-pyrrolizin-1-ol + A. In terms of biological role, involved in the biosynthetic pathway of pyrrolizwilline, a pyrrolizidine alkaloid. Catalyzes the reduction of 3-amino-tetrahydro-pyrrolizinone to 3-amino-tetrahydro-pyrrolizinol. This Xenorhabdus hominickii protein is 3-amino-tetrahydro-pyrrolizinone reductase (xhpD).